The following is a 389-amino-acid chain: Na(+)/H(+) antiporter NhaA 1 (389 aa).

A run of 11 helical transmembrane segments spans residues 12-32, 62-82, 97-117, 128-148, 157-177, 184-204, 220-240, 260-280, 282-302, 331-351, and 365-385; these read VLNE…ALLV, FLLW…GLEL, IVLP…LFAL, GWAI…MMCG, IFLL…IAIF, IVAF…NILG, ISVL…AFFI, FWLA…VNLS, IDIG…LFVG, LYGV…IDGL, and LAIL…LKFF.

The protein belongs to the NhaA Na(+)/H(+) (TC 2.A.33) antiporter family.

Its subcellular location is the cell inner membrane. It carries out the reaction Na(+)(in) + 2 H(+)(out) = Na(+)(out) + 2 H(+)(in). Functionally, na(+)/H(+) antiporter that extrudes sodium in exchange for external protons. The chain is Na(+)/H(+) antiporter NhaA 1 from Campylobacter jejuni subsp. jejuni serotype O:6 (strain 81116 / NCTC 11828).